Reading from the N-terminus, the 322-residue chain is Structural glycoprotein p40 (322 aa).

N-linked (GlcNAc...) asparagine; by host glycosylation is found at N130, N283, and N290.

This sequence belongs to the baculoviridae gp41 family.

The protein localises to the virion. The protein is Structural glycoprotein p40 (P40) of Heliothis zea nuclear polyhedrosis virus (HzSNPV).